The following is a 138-amino-acid chain: Nucleoside diphosphate kinase (138 aa).

ATP contacts are provided by Lys-9, Phe-57, Arg-85, Thr-91, Arg-102, and Asn-112. The active-site Pros-phosphohistidine intermediate is the His-115.

The protein belongs to the NDK family. Homotetramer. Mg(2+) is required as a cofactor.

The protein resides in the cytoplasm. It catalyses the reaction a 2'-deoxyribonucleoside 5'-diphosphate + ATP = a 2'-deoxyribonucleoside 5'-triphosphate + ADP. The enzyme catalyses a ribonucleoside 5'-diphosphate + ATP = a ribonucleoside 5'-triphosphate + ADP. Major role in the synthesis of nucleoside triphosphates other than ATP. The ATP gamma phosphate is transferred to the NDP beta phosphate via a ping-pong mechanism, using a phosphorylated active-site intermediate. This Deinococcus radiodurans (strain ATCC 13939 / DSM 20539 / JCM 16871 / CCUG 27074 / LMG 4051 / NBRC 15346 / NCIMB 9279 / VKM B-1422 / R1) protein is Nucleoside diphosphate kinase.